We begin with the raw amino-acid sequence, 419 residues long: Caspase-12 (419 aa).

Residues 1-92 enclose the CARD domain; that stretch reads MAARRTHERD…QLSLQFSNDE (92 aa). The residue at position 85 (serine 85) is a Phosphoserine. The segment at 88 to 113 is disordered; that stretch reads FSNDEDDGPQKICTPSSPSESKRKVE. Catalysis depends on residues histidine 250 and cysteine 298.

It belongs to the peptidase C14A family. Heterotetramer that consists of two anti-parallel arranged heterodimers, each one formed by two subunits (Potential). Interacts with TRAF2 under resting conditions; this interaction is reduced in ER stress conditions. In terms of tissue distribution, mainly expressed in skeletal muscle and lung.

In terms of biological role, involved in the activation cascade of caspases responsible for apoptosis execution. This is Caspase-12 (Casp12) from Mus musculus (Mouse).